The chain runs to 261 residues: Carnitinyl-CoA dehydratase (261 aa).

Catalysis depends on Glu-111, which acts as the Nucleophile. Glu-131 serves as the catalytic Proton acceptor.

It belongs to the enoyl-CoA hydratase/isomerase family.

It catalyses the reaction (R)-carnitinyl-CoA = crotonobetainyl-CoA + H2O. Its pathway is amine and polyamine metabolism; carnitine metabolism. In terms of biological role, catalyzes the reversible dehydration of L-carnitinyl-CoA to crotonobetainyl-CoA. The protein is Carnitinyl-CoA dehydratase of Escherichia coli O157:H7.